We begin with the raw amino-acid sequence, 1028 residues long: GPI inositol-deacylase (1028 aa).

Residues 51–71 (VFGLGLLLFCIVCMAYLSPFL) traverse the membrane as a helical segment. Asn166 carries an N-linked (GlcNAc...) asparagine glycan. Ser231 is an active-site residue. N-linked (GlcNAc...) asparagine glycans are attached at residues Asn299, Asn530, Asn586, and Asn679. The next 8 helical transmembrane spans lie at 699 to 719 (LAVA…QFAL), 740 to 760 (FWLK…ISFI), 799 to 819 (WIGP…AFGI), 867 to 887 (IMIL…LLFL), 915 to 935 (SYLL…FVFL), 948 to 968 (SHHN…NAGL), 979 to 999 (ISKL…VIYG), and 1002 to 1022 (NLFW…FTSL).

It belongs to the GPI inositol-deacylase family.

Its subcellular location is the endoplasmic reticulum membrane. Functionally, involved in inositol deacylation of GPI-anchored proteins which plays important roles in the quality control and ER-associated degradation of GPI-anchored proteins. The sequence is that of GPI inositol-deacylase (BST1) from Eremothecium gossypii (strain ATCC 10895 / CBS 109.51 / FGSC 9923 / NRRL Y-1056) (Yeast).